Consider the following 759-residue polypeptide: uncharacterized protein (759 aa).

Residues Val352–Ile556 form the MCM domain. Ser397–Ser404 serves as a coordination point for ATP.

Belongs to the MCM family.

This is an uncharacterized protein from Methanocaldococcus jannaschii (strain ATCC 43067 / DSM 2661 / JAL-1 / JCM 10045 / NBRC 100440) (Methanococcus jannaschii).